The primary structure comprises 1191 residues: Pyruvate-flavodoxin oxidoreductase (1191 aa).

4Fe-4S ferredoxin-type domains follow at residues 687-716 and 744-773; these read QVCS…VKAV and YVLA…TGAR. [4Fe-4S] cluster-binding residues include cysteine 696, cysteine 699, cysteine 702, cysteine 706, cysteine 753, cysteine 756, cysteine 759, cysteine 763, cysteine 825, cysteine 828, cysteine 853, and cysteine 1085.

This sequence belongs to the pyruvate:ferredoxin/flavodoxin oxidoreductase family. [4Fe-4S] cluster serves as cofactor.

It carries out the reaction oxidized [flavodoxin] + pyruvate + CoA + 2 H(+) = reduced [flavodoxin] + acetyl-CoA + CO2. Oxidoreductase required for the transfer of electrons from pyruvate to flavodoxin, which reduces nitrogenase. In Rhodospirillum rubrum (strain ATCC 11170 / ATH 1.1.1 / DSM 467 / LMG 4362 / NCIMB 8255 / S1), this protein is Pyruvate-flavodoxin oxidoreductase (nifJ).